Consider the following 444-residue polypeptide: Tol-Pal system protein TolB (444 aa).

The N-terminal stretch at 1–19 (MRNIIYFILSLLFSVTSYA) is a signal peptide.

It belongs to the TolB family. In terms of assembly, the Tol-Pal system is composed of five core proteins: the inner membrane proteins TolA, TolQ and TolR, the periplasmic protein TolB and the outer membrane protein Pal. They form a network linking the inner and outer membranes and the peptidoglycan layer.

Its subcellular location is the periplasm. Functionally, part of the Tol-Pal system, which plays a role in outer membrane invagination during cell division and is important for maintaining outer membrane integrity. The chain is Tol-Pal system protein TolB from Rickettsia rickettsii (strain Iowa).